The primary structure comprises 156 residues: ATP synthase subunit b (156 aa).

Residues 7–29 traverse the membrane as a helical segment; it reads LFAQMVVFLVLAWFTMKFVWPPL.

The protein belongs to the ATPase B chain family. As to quaternary structure, F-type ATPases have 2 components, F(1) - the catalytic core - and F(0) - the membrane proton channel. F(1) has five subunits: alpha(3), beta(3), gamma(1), delta(1), epsilon(1). F(0) has three main subunits: a(1), b(2) and c(10-14). The alpha and beta chains form an alternating ring which encloses part of the gamma chain. F(1) is attached to F(0) by a central stalk formed by the gamma and epsilon chains, while a peripheral stalk is formed by the delta and b chains.

The protein resides in the cell inner membrane. In terms of biological role, f(1)F(0) ATP synthase produces ATP from ADP in the presence of a proton or sodium gradient. F-type ATPases consist of two structural domains, F(1) containing the extramembraneous catalytic core and F(0) containing the membrane proton channel, linked together by a central stalk and a peripheral stalk. During catalysis, ATP synthesis in the catalytic domain of F(1) is coupled via a rotary mechanism of the central stalk subunits to proton translocation. Functionally, component of the F(0) channel, it forms part of the peripheral stalk, linking F(1) to F(0). This is ATP synthase subunit b from Burkholderia ambifaria (strain MC40-6).